Consider the following 460-residue polypeptide: C4-dicarboxylate transport protein (460 aa).

9 consecutive transmembrane segments (helical) span residues 20-40 (SLYFQVIVAIVIGILIGHFYP), 56-76 (LIKMVIAPIIFCTVVSGIAGM), 88-108 (YALLYFEIVSTIALLIGLIVV), 153-173 (IVGAFANGDILQVLMFSVIFG), 200-220 (IINMIMKLAPIGAFGAMAFTI), 234-254 (LMICFYITCALFVVLVLGAIC), 301-321 (VVGLVIPTGYSFNLDGTSIYL), 342-362 (ITLLLVLLLSSKGAAGVTGSG), and 364-384 (IVLAATLSAVGHLPVAGLALI). The tract at residues 438–460 (PEDDLGVAEGPTPANAVNTTKTV) is disordered.

It belongs to the dicarboxylate/amino acid:cation symporter (DAACS) (TC 2.A.23) family.

The protein localises to the cell inner membrane. Its function is as follows. Responsible for the transport of dicarboxylates such as succinate, fumarate, and malate from the periplasm across the membrane. The sequence is that of C4-dicarboxylate transport protein from Pseudomonas savastanoi pv. phaseolicola (strain 1448A / Race 6) (Pseudomonas syringae pv. phaseolicola (strain 1448A / Race 6)).